A 306-amino-acid chain; its full sequence is NAD kinase 1 (306 aa).

The active-site Proton acceptor is the aspartate 67. NAD(+)-binding positions include 67–68 (DG), 149–150 (NE), aspartate 181, and 192–197 (TGYTVS).

The protein belongs to the NAD kinase family. A divalent metal cation is required as a cofactor.

The protein resides in the cytoplasm. It carries out the reaction NAD(+) + ATP = ADP + NADP(+) + H(+). Functionally, involved in the regulation of the intracellular balance of NAD and NADP, and is a key enzyme in the biosynthesis of NADP. Catalyzes specifically the phosphorylation on 2'-hydroxyl of the adenosine moiety of NAD to yield NADP. This chain is NAD kinase 1, found in Trichormus variabilis (strain ATCC 29413 / PCC 7937) (Anabaena variabilis).